The sequence spans 138 residues: MLIPRKVKHRKQHHPRQRGIASGGTSVNFGDYGIQALEHAYVTNRQIESARIAINRHIKRGGKVWINIFPDRPLTKKPAETRMGSGKGSPEWWVANVKPGRVLFELSYPNEAIARAALTRAIHKLPIKARIITREEQF.

The span at methionine 1–glutamine 17 shows a compositional bias: basic residues. A disordered region spans residues methionine 1–glycine 24.

The protein belongs to the universal ribosomal protein uL16 family. Part of the 50S ribosomal subunit.

In terms of biological role, binds 23S rRNA and is also seen to make contacts with the A and possibly P site tRNAs. This is Large ribosomal subunit protein uL16 from Mycobacterium ulcerans (strain Agy99).